The chain runs to 535 residues: MGWLFLKVLFLGVTFLGCLYPLVDFCPSGETRGQKPNFVIILADDMGWGDLGANWAETKDTANLDKMAAEGMRFVDFHAAASTCSPSRASLLTGRLGLRNGVTHNFAVTSVGGLPLNETTLAEVLQQAGYVTGMIGKWHLGHHGPYHPNFRGFDYYFGIPYSHDMGCTDTPGYNHPPCPACPRGDRPSRSLERDCYTDVALPLYENLNIVEQPVNLSSLAHKYAEKAIQFIQHASASGRPFLLYMGLAHMHVPISRTQLSAVLRGRRPYGAGLREMDSLVGQIKDKVDRTAKENTFLWFTGDNGPWAQKCELAGSVGPFTGLWQTHQGGSPAKQTTWEGGHRVPALAYWPGRVPVNVTSTALLSVLDIFPTVVALAGASLPQDRHFDGLDASEVLFGWSQTGHRVLFHPNSGAAGEFGALQTVRLGSYKAFYVSGGAKACDGDVGREQHHDPPLIFNLEDDVAEAVPLDRGSAEYQGVLPKVREILADVLLDIAGDNTSRADYTRHPSVTPCCNPHHVACRCQATGWTDFPTGRC.

The N-terminal stretch at 1–18 is a signal peptide; that stretch reads MGWLFLKVLFLGVTFLGC. Ca(2+)-binding residues include aspartate 44, aspartate 45, and cysteine 84. Catalysis depends on cysteine 84, which acts as the Nucleophile. Cysteine 84 is subject to 3-oxoalanine (Cys). The N-linked (GlcNAc...) asparagine glycan is linked to asparagine 117. Lysine 137 is a substrate binding site. Histidine 139 is an active-site residue. Serine 162 provides a ligand contact to substrate. An N-linked (GlcNAc...) asparagine glycan is attached at asparagine 215. Residue histidine 251 coordinates substrate. Aspartate 302 and asparagine 303 together coordinate Ca(2+). N-linked (GlcNAc...) asparagine glycosylation is found at asparagine 356 and asparagine 497.

It belongs to the sulfatase family. The cofactor is Ca(2+). N-glycosylated with both high mannose and complex type sugars. Post-translationally, the conversion to 3-oxoalanine (also known as C-formylglycine, FGly), of a serine or cysteine residue in prokaryotes and of a cysteine residue in eukaryotes, is critical for catalytic activity. In terms of processing, the 63-kDa precursor undergoes proteolytic processing in two steps, yielding two fragments in the first step (apparent molecular masses of 44 and 18 kDa). In the second step, the 44-kDa fragment is processed further to the 34- and 10-kDa chains. The 10-kDa chain is a cleavage product of the 44-kDa fragment but linked to the 18-kDa chain through a disulfide bridge.

It localises to the lysosome. The catalysed reaction is an aryl sulfate + H2O = a phenol + sulfate + H(+). It carries out the reaction Hydrolysis of the 3-sulfate groups of the N-sulfo-D-glucosamine 3-O-sulfate units of heparin.. In terms of biological role, displays arylsulfatase activity with pseudosubstrates at acidic pH, such as p-nitrocatechol sulfate. Catalyzes the hydrolysis of the 3-sulfate groups of the N-sulfo-D-glucosamine 3-O-sulfate units of heparin. This Canis lupus familiaris (Dog) protein is Arylsulfatase G (ARSG).